Consider the following 819-residue polypeptide: MTSASQILVWGLLAASGAQAQNYGGGSSRSDDAFSYVQPKNTTILGAYGHSPAVYPSPNTTGSGGWETALAQAQDFVAQLTLEEKANMVTGQPGPCVGNIIAIPRLNFSGLCLQDGPLAIRVTDMASVFSAGVTAAASWDRKILYERGYAMGQEFKAKGAHVALGPVAGPLGRSAYSGRNWEGFAADPYLTGVAMEETIQGYQDAGVQACPKHFIGNEQETMRNPTFNDSAPLGTVIQEAVSSNIDDRTMHELYLWPFANAVHAKAASIMCSYQRINGSYGCENSKTLNGLLKGELGFQGYVMSDWGATHSGVAGIKSGQDMDMPGGLGAYGQTFINRSFFGGNVTAAVNNGTLEESRIDDMILRIMTPYFWLGQDQDYPTVDPSTADYNTFSPRNTWYQDFNLTGERSRDVRGNHAALIRKQAAEATVLLKNKNNALPLKAPKTLAVFGNDASDITNGPYNDATYEYGTLAAGGGSGTGRFTYLVSPLTAINARAQKDNTSLVQFWLNNTQIATSDVQADLLRVPTPPTACLVFVKTWAEEGADREHLRLDYNGTEVVEAVAAACNNTIVVTHSSGINELPFANHPNVTAILAAHFPGQESGNSIVDVLYGDVNPSGRLPYTIARNGSDYNAPPTTAVTTSGREDWQSWFDEKLEIDYRYFDAHNIPVLYEFGFGLSYTTFNISDIYATRVVDSITSAPEDRAIQPGGNPELWETIYNVTVSVTNTGDVEGATVPQLYVTFPDSTPEGTPPKQLRGFDKVSLQPGESTKVIFELMRRDLSYWDTVSQQWLIPEGDFTIRVGFSSRNLKEVTTITPVSE.

The first 20 residues, 1–20 (MTSASQILVWGLLAASGAQA), serve as a signal peptide directing secretion. Asn41, Asn59, Asn107, Asn228, and Asn277 each carry an N-linked (GlcNAc...) asparagine glycan. Asp305 is a catalytic residue. N-linked (GlcNAc...) asparagine glycans are attached at residues Asn337, Asn344, Asn351, Asn403, Asn500, Asn509, Asn554, Asn567, Asn588, Asn627, Asn683, and Asn719.

This sequence belongs to the glycosyl hydrolase 3 family.

The protein resides in the secreted. The catalysed reaction is Hydrolysis of terminal, non-reducing beta-D-glucosyl residues with release of beta-D-glucose.. It participates in glycan metabolism; cellulose degradation. In terms of biological role, beta-glucosidases are one of a number of cellulolytic enzymes involved in the degradation of cellulosic biomass. Catalyzes the last step releasing glucose from the inhibitory cellobiose. This chain is Probable beta-glucosidase G (bglG), found in Emericella nidulans (strain FGSC A4 / ATCC 38163 / CBS 112.46 / NRRL 194 / M139) (Aspergillus nidulans).